The chain runs to 278 residues: Bis(5'-nucleosyl)-tetraphosphatase, symmetrical (278 aa).

The protein belongs to the Ap4A hydrolase family.

The catalysed reaction is P(1),P(4)-bis(5'-adenosyl) tetraphosphate + H2O = 2 ADP + 2 H(+). In terms of biological role, hydrolyzes diadenosine 5',5'''-P1,P4-tetraphosphate to yield ADP. The protein is Bis(5'-nucleosyl)-tetraphosphatase, symmetrical of Nitrosococcus oceani (strain ATCC 19707 / BCRC 17464 / JCM 30415 / NCIMB 11848 / C-107).